The sequence spans 450 residues: Tubulin alpha-3 chain (450 aa).

Gln11 contributes to the GTP binding site. At Lys40 the chain carries N6-acetyllysine. The GTP site is built by Glu71, Gly144, Thr145, Thr179, Asn206, and Asn228. A Mg(2+)-binding site is contributed by Glu71. The active site involves Glu254.

The protein belongs to the tubulin family. In terms of assembly, dimer of alpha and beta chains. A typical microtubule is a hollow water-filled tube with an outer diameter of 25 nm and an inner diameter of 15 nM. Alpha-beta heterodimers associate head-to-tail to form protofilaments running lengthwise along the microtubule wall with the beta-tubulin subunit facing the microtubule plus end conferring a structural polarity. Microtubules usually have 13 protofilaments but different protofilament numbers can be found in some organisms and specialized cells. The cofactor is Mg(2+). Post-translationally, undergoes a tyrosination/detyrosination cycle, the cyclic removal and re-addition of a C-terminal tyrosine residue by the enzymes tubulin tyrosine carboxypeptidase (TTCP) and tubulin tyrosine ligase (TTL), respectively. In terms of processing, acetylation of alpha chains at Lys-40 stabilizes microtubules and affects affinity and processivity of microtubule motors. This modification has a role in multiple cellular functions, ranging from cell motility, cell cycle progression or cell differentiation to intracellular trafficking and signaling.

The protein localises to the cytoplasm. The protein resides in the cytoskeleton. It carries out the reaction GTP + H2O = GDP + phosphate + H(+). In terms of biological role, tubulin is the major constituent of microtubules, a cylinder consisting of laterally associated linear protofilaments composed of alpha- and beta-tubulin heterodimers. Microtubules grow by the addition of GTP-tubulin dimers to the microtubule end, where a stabilizing cap forms. Below the cap, tubulin dimers are in GDP-bound state, owing to GTPase activity of alpha-tubulin. This chain is Tubulin alpha-3 chain (TUBA3), found in Zea mays (Maize).